The following is a 1213-amino-acid chain: DNA-directed RNA polymerase subunit beta' (1213 aa).

Positions 60, 62, 75, and 78 each coordinate Zn(2+). Asp450, Asp452, and Asp454 together coordinate Mg(2+). Residues Cys819, Cys893, Cys900, and Cys903 each contribute to the Zn(2+) site.

It belongs to the RNA polymerase beta' chain family. In terms of assembly, the RNAP catalytic core consists of 2 alpha, 1 beta, 1 beta' and 1 omega subunit. When a sigma factor is associated with the core the holoenzyme is formed, which can initiate transcription. The cofactor is Mg(2+). It depends on Zn(2+) as a cofactor.

The enzyme catalyses RNA(n) + a ribonucleoside 5'-triphosphate = RNA(n+1) + diphosphate. DNA-dependent RNA polymerase catalyzes the transcription of DNA into RNA using the four ribonucleoside triphosphates as substrates. This is DNA-directed RNA polymerase subunit beta' from Streptococcus pyogenes serotype M28 (strain MGAS6180).